The chain runs to 893 residues: UPF0182 protein CLM_0018 (893 aa).

7 helical membrane passes run 9–29, 49–69, 94–114, 154–174, 202–222, 246–266, and 273–293; these read IPLF…NFII, AIII…WMYY, LFFI…SSSY, VIIS…FILE, LAIV…IKIW, FYKI…LSIV, and VSVC…ASFL.

Belongs to the UPF0182 family.

The protein resides in the cell membrane. The protein is UPF0182 protein CLM_0018 of Clostridium botulinum (strain Kyoto / Type A2).